We begin with the raw amino-acid sequence, 136 residues long: Cyclase aurE (136 aa).

The protein belongs to the aurE cyclase family.

The protein operates within polyketide biosynthesis. In terms of biological role, cyclase; part of the gene cluster that mediates the biosynthesis of aurovertins, fungal polyketides that exhibit potent inhibition of adenosine triphosphate synthase. Tha biosynthesis starts with the HR-PKS aurA that selects propionate as the starter unit; synthesizes a hexa-ene chain through the repeated functions of the KR and DH domains in the first six iterations; selectively introduces three alpha-methyl substitutions at C4, C6, and C16 using the S-adensylmethionine-dependent cMET; and shuts off KR and DH in the last three iterations to afford a 1,3,5-triketo portion that can undergo intramolecular cyclization to yield the alpha-pyrone intermediate. AurE may act as a cyclase and enhances the rate of pyrone formation and product release of aurA. The methyltransferase aurB then methylates the C17 hydroxyl group. C17 methylation is required to initiate epoxidation by the downstream monooxygenase aurC. The monooxygenase aurC and the epoxide hydrolase aurD can iteratively transform the terminal triene portion of the methylated precursor into the dioxabicyclo[3.2.1]octane scaffold of aurovertin E. Epoxidation modifications of the precursor occur in two separate steps; bis-epoxidation of the two terminal olefins takes place first, followed by another epoxidation that occurs at C7-C8 after tetrahydrofuran formation. The O-acyltransferase aurG converts aurovertin E to aurovertin A. The protein is Cyclase aurE of Calcarisporium arbuscula (Dendryphion arbuscula).